A 185-amino-acid chain; its full sequence is Large ribosomal subunit protein uL10 (185 aa).

The segment at 165-185 is disordered; the sequence is LRAKKEEQGGAGTPAPAEAAE.

The protein belongs to the universal ribosomal protein uL10 family. In terms of assembly, part of the ribosomal stalk of the 50S ribosomal subunit. The N-terminus interacts with L11 and the large rRNA to form the base of the stalk. The C-terminus forms an elongated spine to which L12 dimers bind in a sequential fashion forming a multimeric L10(L12)X complex.

In terms of biological role, forms part of the ribosomal stalk, playing a central role in the interaction of the ribosome with GTP-bound translation factors. The chain is Large ribosomal subunit protein uL10 from Streptomyces griseus subsp. griseus (strain JCM 4626 / CBS 651.72 / NBRC 13350 / KCC S-0626 / ISP 5235).